The sequence spans 309 residues: Ribosomal RNA small subunit methyltransferase H (309 aa).

Residues 34 to 36 (GGH), Asp54, Phe80, Asp102, and Gln109 each bind S-adenosyl-L-methionine.

Belongs to the methyltransferase superfamily. RsmH family.

It localises to the cytoplasm. The enzyme catalyses cytidine(1402) in 16S rRNA + S-adenosyl-L-methionine = N(4)-methylcytidine(1402) in 16S rRNA + S-adenosyl-L-homocysteine + H(+). In terms of biological role, specifically methylates the N4 position of cytidine in position 1402 (C1402) of 16S rRNA. This Cellvibrio japonicus (strain Ueda107) (Pseudomonas fluorescens subsp. cellulosa) protein is Ribosomal RNA small subunit methyltransferase H.